Here is a 518-residue protein sequence, read N- to C-terminus: Cytochrome P450 monooxygenase pyr3 (518 aa).

The helical transmembrane segment at 26–46 (GVAIVLFLAPLALHLVSSYLF) threads the bilayer. Cysteine 458 is a binding site for heme.

Belongs to the cytochrome P450 family. It depends on heme as a cofactor.

It localises to the membrane. It functions in the pathway secondary metabolite biosynthesis; terpenoid biosynthesis. Its function is as follows. Cytochrome P450 monooxygenase; part of the gene cluster that mediates the biosynthesis of pyripyropene A, a specific human acyl-coenzyme A:cholesterol acyltransferase 2 inhibitor. The first step of the pathway is the synthesis of nicotinyl-CoA from nicotinic acid by the nicotinic acid-CoA ligase pyr1. Nicotinyl-CoA is then a substrate of polyketide synthase pyr2 to produce 4-hydroxy-6-(3-pyridinyl)-2H-pyran-2-one (HPPO) which is further prenylated by the polyprenyl transferase pyr6 to yield farnesyl-HPPO. The next steps consist of an epoxidation of farnesyl-HPPO to epoxyfarnesyl-HPPO by FAD-dependent monooxygenase pyr5 and a cyclization of the terpenoid portion by the terpene cyclase pyr4 to yield deacetyl-pyripyropene E. The 2 cytochrome P450 monooxygenases pyr3 and pyr9, and the 2 acetyltransferases pyr7 and pyr8 are involved in the conversion of deacetyl-pyripyropene E into pyripyropene A through several cycles of oxidation and acetylation steps. Pyr7 acetylates deacetyl-pyripyropene E to pyripyropene E which is oxidized to 11-deacetyl-pyripyropene O by pyr3, which is in turn acetylated into pyripyropene O by pyr8. Pyripyropene O is then oxidized to deacetyl-pyripyropene A by pyr9. Deacetyl-pyripyropene A is finally acetylated to pyripyropene A by pyr8. The polypeptide is Cytochrome P450 monooxygenase pyr3 (Aspergillus fumigatus (strain ATCC MYA-4609 / CBS 101355 / FGSC A1100 / Af293) (Neosartorya fumigata)).